The sequence spans 137 residues: Large-conductance mechanosensitive channel (137 aa).

Helical transmembrane passes span 10–30 (FAMR…AAFG) and 76–96 (GVFI…FVAI).

This sequence belongs to the MscL family. In terms of assembly, homopentamer.

It localises to the cell inner membrane. In terms of biological role, channel that opens in response to stretch forces in the membrane lipid bilayer. May participate in the regulation of osmotic pressure changes within the cell. The protein is Large-conductance mechanosensitive channel of Salmonella typhimurium (strain LT2 / SGSC1412 / ATCC 700720).